Reading from the N-terminus, the 369-residue chain is Aminomethyltransferase (369 aa).

Belongs to the GcvT family. As to quaternary structure, the glycine cleavage system is composed of four proteins: P, T, L and H.

It catalyses the reaction N(6)-[(R)-S(8)-aminomethyldihydrolipoyl]-L-lysyl-[protein] + (6S)-5,6,7,8-tetrahydrofolate = N(6)-[(R)-dihydrolipoyl]-L-lysyl-[protein] + (6R)-5,10-methylene-5,6,7,8-tetrahydrofolate + NH4(+). Its function is as follows. The glycine cleavage system catalyzes the degradation of glycine. In Rippkaea orientalis (strain PCC 8801 / RF-1) (Cyanothece sp. (strain PCC 8801)), this protein is Aminomethyltransferase.